The following is a 483-amino-acid chain: Iroquois-class homeodomain protein IRX-5 (483 aa).

Residues 113–175 (DPAYRKNATR…NARRRLKKEN (63 aa)) constitute a DNA-binding region (homeobox; TALE-type). Disordered stretches follow at residues 177–392 (MTWT…QCPF) and 423–442 (GHPGPGPGPTTGPGSHFNGL). The span at 186-203 (EDEEEEENIDLEKNDEDE) shows a compositional bias: acidic residues. Composition is skewed to basic and acidic residues over residues 204–213 (PQKPEDKGDP) and 250–261 (SDFKEPPSEGRL). Composition is skewed to low complexity over residues 266 to 282 (GPPRTGGPSPAGPAAAR) and 374 to 388 (SRASPAPAPSRSPSA). Ser274 bears the Phosphoserine mark. The residue at position 464 (Ser464) is a Phosphoserine.

The protein belongs to the TALE/IRO homeobox family.

Its subcellular location is the nucleus. In terms of biological role, establishes the cardiac repolarization gradient by its repressive actions on the KCND2 potassium-channel gene. Required for retinal cone bipolar cell differentiation. May regulate contrast adaptation in the retina and control specific aspects of visual function in circuits of the mammalian retina. Could be involved in the regulation of both the cell cycle and apoptosis in prostate cancer cells. Involved in craniofacial and gonadal development. Modulates the migration of progenitor cell populations in branchial arches and gonads by repressing CXCL12. In Homo sapiens (Human), this protein is Iroquois-class homeodomain protein IRX-5 (IRX5).